We begin with the raw amino-acid sequence, 385 residues long: uncharacterized protein (385 aa).

It belongs to the mimivirus L17x/L18x family.

This is an uncharacterized protein from Acanthamoeba polyphaga mimivirus (APMV).